Reading from the N-terminus, the 684-residue chain is Threonine--tRNA ligase (684 aa).

A TGS domain is found at 1 to 66 (MSTAASPAPA…DADVEVVPVP (66 aa)). Residues 261-567 (DHRKLGVELD…LTEHYAGAFP (307 aa)) are catalytic. Residues Cys366, His417, and His544 each coordinate Zn(2+).

This sequence belongs to the class-II aminoacyl-tRNA synthetase family. Homodimer. Zn(2+) is required as a cofactor.

It is found in the cytoplasm. The catalysed reaction is tRNA(Thr) + L-threonine + ATP = L-threonyl-tRNA(Thr) + AMP + diphosphate + H(+). Catalyzes the attachment of threonine to tRNA(Thr) in a two-step reaction: L-threonine is first activated by ATP to form Thr-AMP and then transferred to the acceptor end of tRNA(Thr). Also edits incorrectly charged L-seryl-tRNA(Thr). The chain is Threonine--tRNA ligase from Mycobacterium sp. (strain KMS).